Consider the following 1160-residue polypeptide: Nonribosomal peptide synthetase fmqC (1160 aa).

Positions 132–520 (TYRELNDRSS…LGEVEHALQQ (389 aa)) are adenylation. The Carrier domain maps to 642 to 719 (QPVTQLEESL…EMAGMLDGVT (78 aa)). Ser-679 carries the O-(pantetheine 4'-phosphoryl)serine modification. Residues 749-1025 (CTLEDLQEGF…CAAAETPMRI (277 aa)) form a condensation region.

It belongs to the NRP synthetase family. As to quaternary structure, interacts with the mitogen-activated protein kinase mpkA. Phosphorylated by mpkA during conidiogenesis.

Its subcellular location is the cytoplasm. The protein operates within alkaloid biosynthesis. Its function is as follows. Nonribosomal peptide synthetase; part of the gene cluster that mediates the biosynthesis of the antitumor fumiquinazolines that confer a dual-usage capability to defend against phagocytes in the environment and animal hosts. The simplest member is fumiquinazoline F (FQF) with a 6-6-6 tricyclic core derived from anthranilic acid (Ant), tryptophan (Trp), and alanine (Ala). The trimodular NRPS fmqA is responsible for FQF formation. Modules 1, 2 and 3 of fmqA are predicted to activate and load Ant, Trp and Ala, respectively, providing for the assembly of an Ant-Trp-Ala-S-enzyme intermediate that would undergo double cyclization for chain release and generation of the tricyclic 6-6-6 product fumiquinazoline F. The presence of an E domain predicted for module 2 of fmqA is consistent with epimerization of L-Trp to D-Trp during assembly to generate the R-stereocenter at C14 of FQF. The FAD-dependent monooxygenase fmqB and the monomodular NRPS fmqC then maturate FQF to FQA. FmqB oxidizes the 2',3'-double bond of the indole side chain of FQF, and fmqC activates L-Ala as the adenylate, installs it as the pantetheinyl thioester on its carrier protein domain, and acylates the oxidized indole for subsequent intramolecular cyclization to create the 6-5-5-imidazolindolone of FQA. The FAD-linked oxidoreductase fmqD introduces a third layer of scaffold complexity by converting FQA to the spirohemiaminal FQC, presumably by catalyzing the formation of a transient imine within the pyrazinone ring. FQC subsequently converts nonenzymatically to the known cyclic aminal FQD. In Aspergillus fumigatus (strain ATCC MYA-4609 / CBS 101355 / FGSC A1100 / Af293) (Neosartorya fumigata), this protein is Nonribosomal peptide synthetase fmqC.